The chain runs to 390 residues: Chorismate synthase 2 (390 aa).

Positions 39 and 45 each coordinate NADP(+). FMN is bound by residues 132–134, 253–254, Gly-298, 313–317, and Arg-339; these read RSS, NA, and KPIPT.

Belongs to the chorismate synthase family. As to quaternary structure, homotetramer. It depends on FMNH2 as a cofactor.

The enzyme catalyses 5-O-(1-carboxyvinyl)-3-phosphoshikimate = chorismate + phosphate. Its pathway is metabolic intermediate biosynthesis; chorismate biosynthesis; chorismate from D-erythrose 4-phosphate and phosphoenolpyruvate: step 7/7. Its function is as follows. Catalyzes the anti-1,4-elimination of the C-3 phosphate and the C-6 proR hydrogen from 5-enolpyruvylshikimate-3-phosphate (EPSP) to yield chorismate, which is the branch point compound that serves as the starting substrate for the three terminal pathways of aromatic amino acid biosynthesis. This reaction introduces a second double bond into the aromatic ring system. This is Chorismate synthase 2 from Bacillus cereus (strain ZK / E33L).